Reading from the N-terminus, the 358-residue chain is Uroporphyrinogen decarboxylase (358 aa).

Substrate is bound by residues 28 to 32 (RQAGR), aspartate 78, tyrosine 154, serine 208, and histidine 324.

The protein belongs to the uroporphyrinogen decarboxylase family. Homodimer.

It localises to the cytoplasm. The catalysed reaction is uroporphyrinogen III + 4 H(+) = coproporphyrinogen III + 4 CO2. Its pathway is porphyrin-containing compound metabolism; protoporphyrin-IX biosynthesis; coproporphyrinogen-III from 5-aminolevulinate: step 4/4. Its function is as follows. Catalyzes the decarboxylation of four acetate groups of uroporphyrinogen-III to yield coproporphyrinogen-III. The polypeptide is Uroporphyrinogen decarboxylase (Acidiphilium cryptum (strain JF-5)).